The primary structure comprises 388 residues: Diacylglycerol O-acyltransferase 2 (388 aa).

At M1–Q69 the chain is on the cytoplasmic side. The tract at residues R16–W40 is disordered. The chain crosses the membrane as a helical span at residues V70–S88. Residues A89–M92 are Lumenal-facing. The chain crosses the membrane as a helical span at residues Y93–F112. Topologically, residues D113–N388 are cytoplasmic.

The protein belongs to the diacylglycerol acyltransferase family. In terms of assembly, forms multimeric complexes consisting of several DGAT2 subunits. Interacts with SLC27A1 and this interaction is enhanced in the presence of ZFYVE1. In terms of tissue distribution, predominantly expressed in liver and white adipose tissue. Expressed at lower level in mammary gland, testis and peripheral blood leukocytes. Expressed in sebaceous glands of normal skin but decreased psoriatic skin.

The protein localises to the endoplasmic reticulum membrane. It is found in the lipid droplet. The protein resides in the cytoplasm. It localises to the perinuclear region. It carries out the reaction an acyl-CoA + a 1,2-diacyl-sn-glycerol = a triacyl-sn-glycerol + CoA. It catalyses the reaction all-trans-retinol + an acyl-CoA = an all-trans-retinyl ester + CoA. The enzyme catalyses 2-(9Z-octadecenoyl)-glycerol + (9Z)-octadecenoyl-CoA = 1,2-di-(9Z-octadecenoyl)-sn-glycerol + CoA. The catalysed reaction is 1,2-di-(9Z-octadecenoyl)-sn-glycerol + (9Z)-octadecenoyl-CoA = 1,2,3-tri-(9Z-octadecenoyl)-glycerol + CoA. It carries out the reaction all-trans-retinol + hexadecanoyl-CoA = all-trans-retinyl hexadecanoate + CoA. It catalyses the reaction 1-O-(9Z-octadecenyl)-glycerol + (9Z)-octadecenoyl-CoA = 1-O-(9Z-octadecyl)-3-(9Z-octadecenoyl)-glycerol + CoA. The enzyme catalyses 1-(9Z-octadecenoyl)-glycerol + (9Z)-octadecenoyl-CoA = 1,2-di-(9Z-octadecenoyl)-glycerol + CoA. The catalysed reaction is 1,2-di-(9Z-octadecenoyl)-sn-glycerol + hexadecanoyl-CoA = 1,2-di-(9Z)-octadecenoyl-3-hexadecanoyl-sn-glycerol + CoA. It carries out the reaction 1,3-di-(9Z-octadecenoyl)-glycerol + (9Z)-octadecenoyl-CoA = 1,2,3-tri-(9Z-octadecenoyl)-glycerol + CoA. It catalyses the reaction 2,3-di-(9Z)-octadecenoyl-sn-glycerol + (9Z)-octadecenoyl-CoA = 1,2,3-tri-(9Z-octadecenoyl)-glycerol + CoA. The enzyme catalyses 2-(9Z-octadecenoyl)-glycerol + hexadecanoyl-CoA = 1-hexadecanoyl-2-(9Z-octadecenoyl)-sn-glycerol + CoA. It participates in glycerolipid metabolism; triacylglycerol biosynthesis. Inhibited by niacin. Functionally, essential acyltransferase that catalyzes the terminal and only committed step in triacylglycerol synthesis by using diacylglycerol and fatty acyl CoA as substrates. Required for synthesis and storage of intracellular triglycerides. Probably plays a central role in cytosolic lipid accumulation. In liver, is primarily responsible for incorporating endogenously synthesized fatty acids into triglycerides. Also functions as an acyl-CoA retinol acyltransferase (ARAT). Also able to use 1-monoalkylglycerol (1-MAkG) as an acyl acceptor for the synthesis of monoalkyl-monoacylglycerol (MAMAG). The polypeptide is Diacylglycerol O-acyltransferase 2 (Homo sapiens (Human)).